A 254-amino-acid chain; its full sequence is Inner membrane protein YabI (254 aa).

Residues 1–7 (MQALLEH) lie on the Periplasmic side of the membrane. The next 2 helical transmembrane spans lie at 8 to 28 (FITQ…FLES) and 29 to 49 (LALV…GALI). At 50-58 (GSGELSFWH) the chain is on the periplasmic side. A helical transmembrane segment spans residues 59 to 79 (AWLAGIIGCLMGDWISFWLGW). At 80–144 (RFKKPLHRWS…LPVAKFITPN (65 aa)) the chain is on the cytoplasmic side. Residues 145-165 (IIGCLLWPPFYFLPGILAGAA) form a helical membrane-spanning segment. At 166-178 (IDIPAGMQSGEFK) the chain is on the periplasmic side. A helical transmembrane segment spans residues 179-199 (WLLLATAVFLWVGGWLCWRLW). The Cytoplasmic segment spans residues 200–215 (RSGKATDRLSHYLSRG). The chain crosses the membrane as a helical span at residues 216-236 (RLLWLTPLISAIGVVALVVLI). The Periplasmic portion of the chain corresponds to 237 to 254 (RHPLMPVYIDILRKVVGV).

It belongs to the DedA family.

Its subcellular location is the cell inner membrane. The polypeptide is Inner membrane protein YabI (yabI) (Escherichia coli (strain K12)).